Here is a 309-residue protein sequence, read N- to C-terminus: tRNA uridine(34) hydroxylase (309 aa).

The region spanning 130–224 (SDPDTIVIDT…YLEEVPQEES (95 aa)) is the Rhodanese domain. Cysteine 184 serves as the catalytic Cysteine persulfide intermediate.

The protein belongs to the TrhO family.

The enzyme catalyses uridine(34) in tRNA + AH2 + O2 = 5-hydroxyuridine(34) in tRNA + A + H2O. Its function is as follows. Catalyzes oxygen-dependent 5-hydroxyuridine (ho5U) modification at position 34 in tRNAs. This is tRNA uridine(34) hydroxylase from Rhizobium etli (strain ATCC 51251 / DSM 11541 / JCM 21823 / NBRC 15573 / CFN 42).